Reading from the N-terminus, the 879-residue chain is Leucine--tRNA ligase (879 aa).

The 'HIGH' region signature appears at 45 to 55 (PYPSGALHMGH). Positions 637 to 641 (KMSKS) match the 'KMSKS' region motif. Lys-640 contacts ATP.

The protein belongs to the class-I aminoacyl-tRNA synthetase family.

Its subcellular location is the cytoplasm. It carries out the reaction tRNA(Leu) + L-leucine + ATP = L-leucyl-tRNA(Leu) + AMP + diphosphate. In Xylella fastidiosa (strain M12), this protein is Leucine--tRNA ligase.